The chain runs to 118 residues: Large ribosomal subunit protein bL19 (118 aa).

Belongs to the bacterial ribosomal protein bL19 family.

Its function is as follows. This protein is located at the 30S-50S ribosomal subunit interface and may play a role in the structure and function of the aminoacyl-tRNA binding site. The sequence is that of Large ribosomal subunit protein bL19 from Helicobacter hepaticus (strain ATCC 51449 / 3B1).